A 439-amino-acid chain; its full sequence is Mitochondrial distribution and morphology protein 12 (439 aa).

The SMP-LTD domain occupies 1 to 439 (MSIDVNWRFA…VYPSFWTFLI (439 aa)). Disordered regions lie at residues 70 to 103 (YEED…LNEP), 185 to 274 (GWSD…PPRM), and 354 to 386 (PEQQ…RHGG). Over residues 78–91 (TSDASEERGEEHSS) the composition is skewed to basic and acidic residues. The span at 215 to 245 (DTSNSTSRPSTANTLPSHPSGSSKNSGQAAT) shows a compositional bias: polar residues. 2 stretches are compositionally biased toward basic and acidic residues: residues 247 to 261 (RNDH…HLED) and 362 to 371 (SAGDDHRPQS).

The protein belongs to the MDM12 family. As to quaternary structure, component of the ER-mitochondria encounter structure (ERMES) or MDM complex, composed of mmm1, mdm10, mdm12 and mdm34. A mmm1 homodimer associates with one molecule of mdm12 on each side in a pairwise head-to-tail manner, and the SMP-LTD domains of mmm1 and mdm12 generate a continuous hydrophobic tunnel for phospholipid trafficking.

The protein resides in the mitochondrion outer membrane. It is found in the endoplasmic reticulum membrane. Its function is as follows. Component of the ERMES/MDM complex, which serves as a molecular tether to connect the endoplasmic reticulum (ER) and mitochondria. Components of this complex are involved in the control of mitochondrial shape and protein biogenesis, and function in nonvesicular lipid trafficking between the ER and mitochondria. Mdm12 is required for the interaction of the ER-resident membrane protein mmm1 and the outer mitochondrial membrane-resident beta-barrel protein mdm10. The mdm12-mmm1 subcomplex functions in the major beta-barrel assembly pathway that is responsible for biogenesis of all mitochondrial outer membrane beta-barrel proteins, and acts in a late step after the SAM complex. The mdm10-mdm12-mmm1 subcomplex further acts in the TOM40-specific pathway after the action of the mdm12-mmm1 complex. Essential for establishing and maintaining the structure of mitochondria and maintenance of mtDNA nucleoids. The sequence is that of Mitochondrial distribution and morphology protein 12 from Aspergillus fumigatus (strain CBS 144.89 / FGSC A1163 / CEA10) (Neosartorya fumigata).